Reading from the N-terminus, the 145-residue chain is MDIHQILKQLPHRYPILLVDRVLEIEKGKRIKALKNVTMNEPFFMGHFPHHPVMPGVLMLEAMAQAAALLAFETLGVTPDDKTVYYFAGIDGARFKRPVEPGDQLIMDVTLERMKAGIFKFKGVTRVGEAIACEAELMCTMRTIA.

The active site involves H47.

This sequence belongs to the thioester dehydratase family. FabZ subfamily.

The protein localises to the cytoplasm. It catalyses the reaction a (3R)-hydroxyacyl-[ACP] = a (2E)-enoyl-[ACP] + H2O. In terms of biological role, involved in unsaturated fatty acids biosynthesis. Catalyzes the dehydration of short chain beta-hydroxyacyl-ACPs and long chain saturated and unsaturated beta-hydroxyacyl-ACPs. The sequence is that of 3-hydroxyacyl-[acyl-carrier-protein] dehydratase FabZ from Polaromonas sp. (strain JS666 / ATCC BAA-500).